The sequence spans 84 residues: ATP synthase subunit c (84 aa).

2 helical membrane passes run 9-29 and 57-77; these read LGLA…GCGI and ILGL…NLII.

The protein belongs to the ATPase C chain family. F-type ATPases have 2 components, F(1) - the catalytic core - and F(0) - the membrane proton channel. F(1) has five subunits: alpha(3), beta(3), gamma(1), delta(1), epsilon(1). F(0) has three main subunits: a(1), b(2) and c(10-14). The alpha and beta chains form an alternating ring which encloses part of the gamma chain. F(1) is attached to F(0) by a central stalk formed by the gamma and epsilon chains, while a peripheral stalk is formed by the delta and b chains.

It is found in the cell membrane. In terms of biological role, f(1)F(0) ATP synthase produces ATP from ADP in the presence of a proton or sodium gradient. F-type ATPases consist of two structural domains, F(1) containing the extramembraneous catalytic core and F(0) containing the membrane proton channel, linked together by a central stalk and a peripheral stalk. During catalysis, ATP synthesis in the catalytic domain of F(1) is coupled via a rotary mechanism of the central stalk subunits to proton translocation. Its function is as follows. Key component of the F(0) channel; it plays a direct role in translocation across the membrane. A homomeric c-ring of between 10-14 subunits forms the central stalk rotor element with the F(1) delta and epsilon subunits. The protein is ATP synthase subunit c of Lawsonia intracellularis (strain PHE/MN1-00).